The chain runs to 106 residues: Iron-sulfur cluster assembly protein CyaY (106 aa).

It belongs to the frataxin family.

In terms of biological role, involved in iron-sulfur (Fe-S) cluster assembly. May act as a regulator of Fe-S biogenesis. This Escherichia coli O139:H28 (strain E24377A / ETEC) protein is Iron-sulfur cluster assembly protein CyaY.